We begin with the raw amino-acid sequence, 235 residues long: Phosphoribosylaminoimidazole-succinocarboxamide synthase (235 aa).

Belongs to the SAICAR synthetase family.

The enzyme catalyses 5-amino-1-(5-phospho-D-ribosyl)imidazole-4-carboxylate + L-aspartate + ATP = (2S)-2-[5-amino-1-(5-phospho-beta-D-ribosyl)imidazole-4-carboxamido]succinate + ADP + phosphate + 2 H(+). The protein operates within purine metabolism; IMP biosynthesis via de novo pathway; 5-amino-1-(5-phospho-D-ribosyl)imidazole-4-carboxamide from 5-amino-1-(5-phospho-D-ribosyl)imidazole-4-carboxylate: step 1/2. This Prosthecochloris aestuarii (strain DSM 271 / SK 413) protein is Phosphoribosylaminoimidazole-succinocarboxamide synthase.